The sequence spans 91 residues: DNA-directed RNA polymerase subunit omega (91 aa).

This sequence belongs to the RNA polymerase subunit omega family. The RNAP catalytic core consists of 2 alpha, 1 beta, 1 beta' and 1 omega subunit. When a sigma factor is associated with the core the holoenzyme is formed, which can initiate transcription.

It catalyses the reaction RNA(n) + a ribonucleoside 5'-triphosphate = RNA(n+1) + diphosphate. Its function is as follows. Promotes RNA polymerase assembly. Latches the N- and C-terminal regions of the beta' subunit thereby facilitating its interaction with the beta and alpha subunits. The protein is DNA-directed RNA polymerase subunit omega of Enterobacter sp. (strain 638).